The following is a 594-amino-acid chain: Apolipoprotein N-acyltransferase (594 aa).

A compositionally biased stretch (acidic residues) spans M1–E29. Residues M1 to I48 form a disordered region. Topologically, residues M1–C67 are cytoplasmic. Positions P30 to S40 are enriched in basic and acidic residues. The chain crosses the membrane as a helical span at residues A68–I87. Over G88 to G116 the chain is Extracellular. The helical transmembrane segment at Y117–S134 threads the bilayer. Residues G135–G138 lie on the Cytoplasmic side of the membrane. Residues A139 to A160 form a helical membrane-spanning segment. The Extracellular portion of the chain corresponds to V161–A221. Residues V222–W239 form a helical membrane-spanning segment. Over W240–P251 the chain is Cytoplasmic. Residues A252 to L269 traverse the membrane as a helical segment. Topologically, residues V270–G554 are extracellular. One can recognise a CN hydrolase domain in the interval V287–L543. Residue E340 is the Proton acceptor of the active site. Residue K405 is part of the active site. C455 (nucleophile) is an active-site residue. Residues P555–A572 form a helical membrane-spanning segment. At I573–R594 the chain is on the cytoplasmic side.

This sequence belongs to the CN hydrolase family. Apolipoprotein N-acyltransferase subfamily. Interacts with Ppm1 (AC A0QZ12) upon coexpression in E.coli, which increases the PPM synthase activity of Ppm1.

It localises to the cell membrane. It carries out the reaction N-terminal S-1,2-diacyl-sn-glyceryl-L-cysteinyl-[lipoprotein] + a glycerophospholipid = N-acyl-S-1,2-diacyl-sn-glyceryl-L-cysteinyl-[lipoprotein] + a 2-acyl-sn-glycero-3-phospholipid + H(+). The protein operates within protein modification; lipoprotein biosynthesis (N-acyl transfer). Its function is as follows. Catalyzes the phospholipid dependent N-acylation of the N-terminal cysteine of apolipoprotein, the last step in lipoprotein maturation. Can transfer a number of fatty acids (C16 and C19, palmitic and probably tuberculostearic acids respectively are shown). Enhances the polyprenol monophosphomannose (PPM) synthase activity of Ppm1 (AC A0QZ12) without itself having PPM synthase catalytic activity. This chain is Apolipoprotein N-acyltransferase, found in Mycolicibacterium smegmatis (strain ATCC 700084 / mc(2)155) (Mycobacterium smegmatis).